We begin with the raw amino-acid sequence, 549 residues long: Arginine--tRNA ligase (549 aa).

The 'HIGH' region motif lies at 132–142; sequence ANPTGPLHLAH.

Belongs to the class-I aminoacyl-tRNA synthetase family. Monomer.

It is found in the cytoplasm. It catalyses the reaction tRNA(Arg) + L-arginine + ATP = L-arginyl-tRNA(Arg) + AMP + diphosphate. In Renibacterium salmoninarum (strain ATCC 33209 / DSM 20767 / JCM 11484 / NBRC 15589 / NCIMB 2235), this protein is Arginine--tRNA ligase.